Here is a 58-residue protein sequence, read N- to C-terminus: MSKTVVRKNESLDDALRRFKRSVTKAGTLQESRKREFYEKLSVKRKRKSEAARKRKKF.

This sequence belongs to the bacterial ribosomal protein bS21 family.

The protein is Small ribosomal subunit protein bS21 of Streptococcus pyogenes serotype M49 (strain NZ131).